A 76-amino-acid chain; its full sequence is UPF0270 protein PSPA7_1664 (76 aa).

It belongs to the UPF0270 family.

The chain is UPF0270 protein PSPA7_1664 from Pseudomonas paraeruginosa (strain DSM 24068 / PA7) (Pseudomonas aeruginosa (strain PA7)).